A 158-amino-acid polypeptide reads, in one-letter code: Transcription elongation factor GreA (158 aa).

The protein belongs to the GreA/GreB family.

Its function is as follows. Necessary for efficient RNA polymerase transcription elongation past template-encoded arresting sites. The arresting sites in DNA have the property of trapping a certain fraction of elongating RNA polymerases that pass through, resulting in locked ternary complexes. Cleavage of the nascent transcript by cleavage factors such as GreA or GreB allows the resumption of elongation from the new 3'terminus. GreA releases sequences of 2 to 3 nucleotides. This Psychrobacter sp. (strain PRwf-1) protein is Transcription elongation factor GreA.